The following is a 100-amino-acid chain: Large ribosomal subunit protein eL36A (100 aa).

Thr2 bears the N-acetylthreonine mark.

The protein belongs to the eukaryotic ribosomal protein eL36 family. As to quaternary structure, component of the large ribosomal subunit (LSU). Mature yeast ribosomes consist of a small (40S) and a large (60S) subunit. The 40S small subunit contains 1 molecule of ribosomal RNA (18S rRNA) and 33 different proteins (encoded by 57 genes). The large 60S subunit contains 3 rRNA molecules (25S, 5.8S and 5S rRNA) and 46 different proteins (encoded by 81 genes). In terms of processing, N-terminally acetylated by acetyltransferase NatA.

Its subcellular location is the cytoplasm. Its function is as follows. Component of the ribosome, a large ribonucleoprotein complex responsible for the synthesis of proteins in the cell. The small ribosomal subunit (SSU) binds messenger RNAs (mRNAs) and translates the encoded message by selecting cognate aminoacyl-transfer RNA (tRNA) molecules. The large subunit (LSU) contains the ribosomal catalytic site termed the peptidyl transferase center (PTC), which catalyzes the formation of peptide bonds, thereby polymerizing the amino acids delivered by tRNAs into a polypeptide chain. The nascent polypeptides leave the ribosome through a tunnel in the LSU and interact with protein factors that function in enzymatic processing, targeting, and the membrane insertion of nascent chains at the exit of the ribosomal tunnel. The polypeptide is Large ribosomal subunit protein eL36A (Saccharomyces cerevisiae (strain ATCC 204508 / S288c) (Baker's yeast)).